The following is a 387-amino-acid chain: Phosphoglycerate kinase (387 aa).

Residues 21-23 (DLN), arginine 36, 59-62 (HLGR), arginine 113, and arginine 146 contribute to the substrate site. ATP is bound by residues lysine 197, glutamate 314, and 340–343 (GGDT).

The protein belongs to the phosphoglycerate kinase family. Monomer.

The protein resides in the cytoplasm. It carries out the reaction (2R)-3-phosphoglycerate + ATP = (2R)-3-phospho-glyceroyl phosphate + ADP. The protein operates within carbohydrate degradation; glycolysis; pyruvate from D-glyceraldehyde 3-phosphate: step 2/5. This Salmonella schwarzengrund (strain CVM19633) protein is Phosphoglycerate kinase.